The primary structure comprises 316 residues: 4-hydroxy-3-methylbut-2-enyl diphosphate reductase (316 aa).

Cys-12 is a [4Fe-4S] cluster binding site. (2E)-4-hydroxy-3-methylbut-2-enyl diphosphate contacts are provided by His-41 and His-74. Dimethylallyl diphosphate contacts are provided by His-41 and His-74. Isopentenyl diphosphate is bound by residues His-41 and His-74. Cys-96 is a [4Fe-4S] cluster binding site. His-124 is a (2E)-4-hydroxy-3-methylbut-2-enyl diphosphate binding site. His-124 contributes to the dimethylallyl diphosphate binding site. Position 124 (His-124) interacts with isopentenyl diphosphate. The active-site Proton donor is Glu-126. A (2E)-4-hydroxy-3-methylbut-2-enyl diphosphate-binding site is contributed by Thr-167. A [4Fe-4S] cluster-binding site is contributed by Cys-197. The (2E)-4-hydroxy-3-methylbut-2-enyl diphosphate site is built by Ser-225, Ser-226, Asn-227, and Ser-269. The dimethylallyl diphosphate site is built by Ser-225, Ser-226, Asn-227, and Ser-269. Positions 225, 226, 227, and 269 each coordinate isopentenyl diphosphate.

It belongs to the IspH family. Homodimer. [4Fe-4S] cluster is required as a cofactor.

It catalyses the reaction isopentenyl diphosphate + 2 oxidized [2Fe-2S]-[ferredoxin] + H2O = (2E)-4-hydroxy-3-methylbut-2-enyl diphosphate + 2 reduced [2Fe-2S]-[ferredoxin] + 2 H(+). The catalysed reaction is dimethylallyl diphosphate + 2 oxidized [2Fe-2S]-[ferredoxin] + H2O = (2E)-4-hydroxy-3-methylbut-2-enyl diphosphate + 2 reduced [2Fe-2S]-[ferredoxin] + 2 H(+). The protein operates within isoprenoid biosynthesis; dimethylallyl diphosphate biosynthesis; dimethylallyl diphosphate from (2E)-4-hydroxy-3-methylbutenyl diphosphate: step 1/1. It participates in isoprenoid biosynthesis; isopentenyl diphosphate biosynthesis via DXP pathway; isopentenyl diphosphate from 1-deoxy-D-xylulose 5-phosphate: step 6/6. Its function is as follows. Catalyzes the conversion of 1-hydroxy-2-methyl-2-(E)-butenyl 4-diphosphate (HMBPP) into a mixture of isopentenyl diphosphate (IPP) and dimethylallyl diphosphate (DMAPP). Acts in the terminal step of the DOXP/MEP pathway for isoprenoid precursor biosynthesis. In Pectobacterium carotovorum subsp. carotovorum (strain PC1), this protein is 4-hydroxy-3-methylbut-2-enyl diphosphate reductase.